Reading from the N-terminus, the 260-residue chain is Ribonuclease PH (260 aa).

Residues Arg-88 and 126 to 128 (GTR) contribute to the phosphate site.

Belongs to the RNase PH family. Homohexameric ring arranged as a trimer of dimers.

The catalysed reaction is tRNA(n+1) + phosphate = tRNA(n) + a ribonucleoside 5'-diphosphate. Its function is as follows. Phosphorolytic 3'-5' exoribonuclease that plays an important role in tRNA 3'-end maturation. Removes nucleotide residues following the 3'-CCA terminus of tRNAs; can also add nucleotides to the ends of RNA molecules by using nucleoside diphosphates as substrates, but this may not be physiologically important. Probably plays a role in initiation of 16S rRNA degradation (leading to ribosome degradation) during starvation. This chain is Ribonuclease PH, found in Mycolicibacterium gilvum (strain PYR-GCK) (Mycobacterium gilvum (strain PYR-GCK)).